The chain runs to 102 residues: Small ribosomal subunit protein uS10 (102 aa).

This sequence belongs to the universal ribosomal protein uS10 family. As to quaternary structure, part of the 30S ribosomal subunit.

Involved in the binding of tRNA to the ribosomes. The protein is Small ribosomal subunit protein uS10 of Acidothermus cellulolyticus (strain ATCC 43068 / DSM 8971 / 11B).